Reading from the N-terminus, the 393-residue chain is NADH-quinone oxidoreductase subunit D (393 aa).

This sequence belongs to the complex I 49 kDa subunit family. In terms of assembly, NDH-1 is composed of 14 different subunits. Subunits NuoB, C, D, E, F, and G constitute the peripheral sector of the complex.

Its subcellular location is the cell inner membrane. It carries out the reaction a quinone + NADH + 5 H(+)(in) = a quinol + NAD(+) + 4 H(+)(out). Its function is as follows. NDH-1 shuttles electrons from NADH, via FMN and iron-sulfur (Fe-S) centers, to quinones in the respiratory chain. The immediate electron acceptor for the enzyme in this species is believed to be ubiquinone. Couples the redox reaction to proton translocation (for every two electrons transferred, four hydrogen ions are translocated across the cytoplasmic membrane), and thus conserves the redox energy in a proton gradient. The protein is NADH-quinone oxidoreductase subunit D of Ehrlichia ruminantium (strain Gardel).